The primary structure comprises 319 residues: DNA-directed RNA polymerases II, IV and V subunit 3 (319 aa).

The residue at position 1 (Met1) is an N-acetylmethionine.

The protein belongs to the archaeal Rpo3/eukaryotic RPB3 RNA polymerase subunit family. As to quaternary structure, component of the RNA polymerase II complex consisting of at least 12 subunits. Interacts with SHH1, CLSY1, NRPB11 and NRPD1. Interacts with IYO.

It localises to the nucleus. Its function is as follows. DNA-dependent RNA polymerase catalyzes the transcription of DNA into RNA using the four ribonucleoside triphosphates as substrates. Component of RNA polymerase II which synthesizes mRNA precursors and many functional non-coding RNAs. Pol II is the central component of the basal RNA polymerase II transcription machinery. It is composed of mobile elements that move relative to each other. NRPB3 is part of the core element with the central large cleft and the clamp element that moves to open and close the cleft. Component of RNA polymerases IV and V which mediate short-interfering RNAs (siRNA) accumulation and subsequent RNA-directed DNA methylation-dependent (RdDM) transcriptional gene silencing (TGS) of endogenous repeated sequences, including transposable elements. The protein is DNA-directed RNA polymerases II, IV and V subunit 3 (NRPB3) of Arabidopsis thaliana (Mouse-ear cress).